The chain runs to 155 residues: uncharacterized protein (155 aa).

The N-terminal stretch at 1-23 (MRLMRNLMNALLLGAAASSLAVA) is a signal peptide. Cysteine 86 and cysteine 91 form a disulfide bridge.

It belongs to the ivy family.

The protein resides in the periplasm. This is an uncharacterized protein from Pseudomonas aeruginosa (strain ATCC 15692 / DSM 22644 / CIP 104116 / JCM 14847 / LMG 12228 / 1C / PRS 101 / PAO1).